The chain runs to 433 residues: Divalent metal cation transporter MntH (433 aa).

The next 11 helical transmembrane spans lie at 32–52 (LIFA…GNFA), 62–82 (GYDL…FQGL), 101–121 (TLPP…AMAT), 131–151 (IGIA…TGIV), 168–188 (LVIG…LLIV), 209–229 (ALTI…LFLH), 256–276 (VLAA…MAAG), 296–316 (SPLL…ASGV), 345–365 (ALTM…TRAL), 366–386 (VLSQ…LLWF), and 401–421 (ITAI…VILL).

This sequence belongs to the NRAMP family.

The protein resides in the cell inner membrane. H(+)-stimulated, divalent metal cation uptake system. The chain is Divalent metal cation transporter MntH from Acidiphilium cryptum (strain JF-5).